A 157-amino-acid polypeptide reads, in one-letter code: Small ribosomal subunit protein uS7 (157 aa).

This sequence belongs to the universal ribosomal protein uS7 family. In terms of assembly, part of the 30S ribosomal subunit. Contacts proteins S9 and S11.

One of the primary rRNA binding proteins, it binds directly to 16S rRNA where it nucleates assembly of the head domain of the 30S subunit. Is located at the subunit interface close to the decoding center, probably blocks exit of the E-site tRNA. The chain is Small ribosomal subunit protein uS7 from Borrelia duttonii (strain Ly).